Reading from the N-terminus, the 223-residue chain is Imidazoleglycerol-phosphate dehydratase (223 aa).

The protein belongs to the imidazoleglycerol-phosphate dehydratase family.

The catalysed reaction is D-erythro-1-(imidazol-4-yl)glycerol 3-phosphate = 3-(imidazol-4-yl)-2-oxopropyl phosphate + H2O. It functions in the pathway amino-acid biosynthesis; L-histidine biosynthesis; L-histidine from 5-phospho-alpha-D-ribose 1-diphosphate: step 6/9. The chain is Imidazoleglycerol-phosphate dehydratase (HIS3) from Torulaspora delbrueckii (Yeast).